A 586-amino-acid chain; its full sequence is Putative butyrophilin subfamily 2 member A3 (586 aa).

The first 27 residues, 1–27 (MEPAAALHFSRPASLLLLLSLCALVSA), serve as a signal peptide directing secretion. One can recognise an Ig-like V-type domain in the interval 28 to 139 (QVTVVGPTDP…SCNEAILHLV (112 aa)). Over 28-246 (QVTVVGPTDP…SFMPSRSPCV (219 aa)) the chain is Extracellular. Residues Asn-45, Asn-112, Asn-214, and Asn-220 are each glycosylated (N-linked (GlcNAc...) asparagine). Cys-50 and Cys-123 form a disulfide bridge. A helical membrane pass occupies residues 247-267 (VILPVIMIILMIPIAICIYWI). At 268–586 (NNLQKEKKDS…VPQLPARKKV (319 aa)) the chain is on the cytoplasmic side. One can recognise a B30.2/SPRY domain in the interval 281–474 (TFNLCLSLAG…ILICSAFTGA (194 aa)).

It belongs to the immunoglobulin superfamily. BTN/MOG family.

The protein resides in the membrane. This is Putative butyrophilin subfamily 2 member A3 (BTN2A3P) from Homo sapiens (Human).